A 214-amino-acid chain; its full sequence is ATP phosphoribosyltransferase (214 aa).

Belongs to the ATP phosphoribosyltransferase family. Short subfamily. Heteromultimer composed of HisG and HisZ subunits.

It is found in the cytoplasm. It carries out the reaction 1-(5-phospho-beta-D-ribosyl)-ATP + diphosphate = 5-phospho-alpha-D-ribose 1-diphosphate + ATP. The protein operates within amino-acid biosynthesis; L-histidine biosynthesis; L-histidine from 5-phospho-alpha-D-ribose 1-diphosphate: step 1/9. In terms of biological role, catalyzes the condensation of ATP and 5-phosphoribose 1-diphosphate to form N'-(5'-phosphoribosyl)-ATP (PR-ATP). Has a crucial role in the pathway because the rate of histidine biosynthesis seems to be controlled primarily by regulation of HisG enzymatic activity. The chain is ATP phosphoribosyltransferase from Lysinibacillus sphaericus (strain C3-41).